The sequence spans 193 residues: Acyl carrier protein phosphodiesterase (193 aa).

The protein belongs to the AcpH family.

The catalysed reaction is holo-[ACP] + H2O = apo-[ACP] + (R)-4'-phosphopantetheine + H(+). Its function is as follows. Converts holo-ACP to apo-ACP by hydrolytic cleavage of the phosphopantetheine prosthetic group from ACP. This Salmonella dublin (strain CT_02021853) protein is Acyl carrier protein phosphodiesterase.